The chain runs to 721 residues: Fatty acid oxidation complex subunit alpha (721 aa).

The interval 1–190 (MIYEGKAITV…KVGAVDAVVA (190 aa)) is enoyl-CoA hydratase/isomerase. Residue Asp297 participates in substrate binding. The segment at 312 to 721 (KDVKQAAVLG…SFFGQASSEE (410 aa)) is 3-hydroxyacyl-CoA dehydrogenase. NAD(+)-binding positions include Met325, Asp344, 401-403 (VVE), Lys408, and Ser430. The active-site For 3-hydroxyacyl-CoA dehydrogenase activity is His451. Residue Asn454 coordinates NAD(+). Substrate-binding residues include Asn501 and Tyr660.

This sequence in the N-terminal section; belongs to the enoyl-CoA hydratase/isomerase family. The protein in the C-terminal section; belongs to the 3-hydroxyacyl-CoA dehydrogenase family. In terms of assembly, heterotetramer of two alpha chains (FadB) and two beta chains (FadA).

The enzyme catalyses a (3S)-3-hydroxyacyl-CoA + NAD(+) = a 3-oxoacyl-CoA + NADH + H(+). It carries out the reaction a (3S)-3-hydroxyacyl-CoA = a (2E)-enoyl-CoA + H2O. It catalyses the reaction a 4-saturated-(3S)-3-hydroxyacyl-CoA = a (3E)-enoyl-CoA + H2O. The catalysed reaction is (3S)-3-hydroxybutanoyl-CoA = (3R)-3-hydroxybutanoyl-CoA. The enzyme catalyses a (3Z)-enoyl-CoA = a 4-saturated (2E)-enoyl-CoA. It carries out the reaction a (3E)-enoyl-CoA = a 4-saturated (2E)-enoyl-CoA. Its pathway is lipid metabolism; fatty acid beta-oxidation. Functionally, involved in the aerobic and anaerobic degradation of long-chain fatty acids via beta-oxidation cycle. Catalyzes the formation of 3-oxoacyl-CoA from enoyl-CoA via L-3-hydroxyacyl-CoA. It can also use D-3-hydroxyacyl-CoA and cis-3-enoyl-CoA as substrate. In Pseudomonas savastanoi pv. phaseolicola (strain 1448A / Race 6) (Pseudomonas syringae pv. phaseolicola (strain 1448A / Race 6)), this protein is Fatty acid oxidation complex subunit alpha.